We begin with the raw amino-acid sequence, 375 residues long: Queuine tRNA-ribosyltransferase (375 aa).

Asp-89 serves as the catalytic Proton acceptor. Substrate contacts are provided by residues 89–93 (DSGGF), Asp-143, Gln-187, and Gly-214. The interval 245–251 (GVGKPED) is RNA binding. Asp-264 acts as the Nucleophile in catalysis. Residues 269-273 (TRNAR) are RNA binding; important for wobble base 34 recognition. Positions 302, 304, 307, and 333 each coordinate Zn(2+).

This sequence belongs to the queuine tRNA-ribosyltransferase family. As to quaternary structure, homodimer. Within each dimer, one monomer is responsible for RNA recognition and catalysis, while the other monomer binds to the replacement base PreQ1. Zn(2+) is required as a cofactor.

It carries out the reaction 7-aminomethyl-7-carbaguanine + guanosine(34) in tRNA = 7-aminomethyl-7-carbaguanosine(34) in tRNA + guanine. The protein operates within tRNA modification; tRNA-queuosine biosynthesis. Catalyzes the base-exchange of a guanine (G) residue with the queuine precursor 7-aminomethyl-7-deazaguanine (PreQ1) at position 34 (anticodon wobble position) in tRNAs with GU(N) anticodons (tRNA-Asp, -Asn, -His and -Tyr). Catalysis occurs through a double-displacement mechanism. The nucleophile active site attacks the C1' of nucleotide 34 to detach the guanine base from the RNA, forming a covalent enzyme-RNA intermediate. The proton acceptor active site deprotonates the incoming PreQ1, allowing a nucleophilic attack on the C1' of the ribose to form the product. After dissociation, two additional enzymatic reactions on the tRNA convert PreQ1 to queuine (Q), resulting in the hypermodified nucleoside queuosine (7-(((4,5-cis-dihydroxy-2-cyclopenten-1-yl)amino)methyl)-7-deazaguanosine). The polypeptide is Queuine tRNA-ribosyltransferase (Salmonella arizonae (strain ATCC BAA-731 / CDC346-86 / RSK2980)).